The following is a 224-amino-acid chain: UPF0758 protein VFMJ11_0123 (224 aa).

Residues 102 to 224 enclose the MPN domain; the sequence is ALTSPEHTKR…IVSFAERGWI (123 aa). Zn(2+) contacts are provided by His-173, His-175, and Asp-186. Residues 173 to 186 carry the JAMM motif motif; sequence HNHPSGVAEPSQAD.

This sequence belongs to the UPF0758 family.

The chain is UPF0758 protein VFMJ11_0123 from Aliivibrio fischeri (strain MJ11) (Vibrio fischeri).